The following is a 264-amino-acid chain: Putative hydro-lyase Bpet2233 (264 aa).

It belongs to the D-glutamate cyclase family.

This is Putative hydro-lyase Bpet2233 from Bordetella petrii (strain ATCC BAA-461 / DSM 12804 / CCUG 43448).